We begin with the raw amino-acid sequence, 343 residues long: S-adenosylmethionine:tRNA ribosyltransferase-isomerase (343 aa).

Belongs to the QueA family. As to quaternary structure, monomer.

It localises to the cytoplasm. The catalysed reaction is 7-aminomethyl-7-carbaguanosine(34) in tRNA + S-adenosyl-L-methionine = epoxyqueuosine(34) in tRNA + adenine + L-methionine + 2 H(+). It participates in tRNA modification; tRNA-queuosine biosynthesis. In terms of biological role, transfers and isomerizes the ribose moiety from AdoMet to the 7-aminomethyl group of 7-deazaguanine (preQ1-tRNA) to give epoxyqueuosine (oQ-tRNA). This chain is S-adenosylmethionine:tRNA ribosyltransferase-isomerase, found in Hydrogenobaculum sp. (strain Y04AAS1).